Reading from the N-terminus, the 281-residue chain is Bifunctional protein FolD (281 aa).

NADP(+) contacts are provided by residues 165–167 (GRG), Thr192, and Val233.

Belongs to the tetrahydrofolate dehydrogenase/cyclohydrolase family. Homodimer.

It catalyses the reaction (6R)-5,10-methylene-5,6,7,8-tetrahydrofolate + NADP(+) = (6R)-5,10-methenyltetrahydrofolate + NADPH. The enzyme catalyses (6R)-5,10-methenyltetrahydrofolate + H2O = (6R)-10-formyltetrahydrofolate + H(+). It functions in the pathway one-carbon metabolism; tetrahydrofolate interconversion. Its function is as follows. Catalyzes the oxidation of 5,10-methylenetetrahydrofolate to 5,10-methenyltetrahydrofolate and then the hydrolysis of 5,10-methenyltetrahydrofolate to 10-formyltetrahydrofolate. The protein is Bifunctional protein FolD of Mycobacterium marinum (strain ATCC BAA-535 / M).